Consider the following 335-residue polypeptide: 2-acylglycerol O-acyltransferase 1 (335 aa).

2 helical membrane-spanning segments follow: residues 24-44 (WLLSFLLFAQVCLGIIVFLII) and 104-124 (YIFGFHPHGVLVVGAFGNFCT). Residues Asn125 and Asn180 are each glycosylated (N-linked (GlcNAc...) asparagine).

Belongs to the diacylglycerol acyltransferase family.

Its subcellular location is the endoplasmic reticulum membrane. The enzyme catalyses a 2-acylglycerol + an acyl-CoA = a 1,2-diacylglycerol + CoA. It carries out the reaction 2-(9Z-octadecenoyl)-glycerol + butanoyl-CoA = 1-butanoyl-2-(9Z-octadecenoyl)-glycerol + CoA. The catalysed reaction is 2-(9Z-octadecenoyl)-glycerol + octanoyl-CoA = 1-octanoyl-2-(9Z-octadecenoyl)-glycerol + CoA. It catalyses the reaction 2-(9Z-octadecenoyl)-glycerol + dodecanoyl-CoA = 1-dodecanoyl-2-(9Z-octadecenoyl)-glycerol + CoA. The enzyme catalyses 2-(9Z-octadecenoyl)-glycerol + tetradecanoyl-CoA = 1-tetradecanoyl-2-(9Z-octadecenoyl)-glycerol + CoA. It carries out the reaction 2-(9Z-octadecenoyl)-glycerol + hexadecanoyl-CoA = 1-hexadecanoyl-2-(9Z-octadecenoyl)-glycerol + CoA. The catalysed reaction is 2-(9Z-octadecenoyl)-glycerol + octadecanoyl-CoA = 1-octadecanoyl-2-(9Z-octadecenoyl)-glycerol + CoA. It catalyses the reaction eicosanoyl-CoA + 2-(9Z-octadecenoyl)-glycerol = 1-eicosanoyl-2-(9Z-octadecenoyl)-glycerol + CoA. The enzyme catalyses 2-(9Z-octadecenoyl)-glycerol + (9Z)-octadecenoyl-CoA = 1,2-di-(9Z-octadecenoyl)-glycerol + CoA. It carries out the reaction 2-(9Z-octadecenoyl)-glycerol + (9Z,12Z)-octadecadienoyl-CoA = 1-(9Z,12Z-octadecadienoyl)-2-(9Z-octadecenoyl)-glycerol + CoA. The catalysed reaction is 2-(9Z-octadecenoyl)-glycerol + (5Z,8Z,11Z,14Z)-eicosatetraenoyl-CoA = 1-(5Z,8Z,11Z,14Z-eicosatetraenoyl)-2-(9Z-octadecenoyl)-glycerol + CoA. It catalyses the reaction a 2-acylglycerol + an acyl-CoA = a 1,2-diacyl-sn-glycerol + CoA. The enzyme catalyses a 2-acylglycerol + an acyl-CoA = a 2,3-diacyl-sn-glycerol + CoA. It carries out the reaction a 1-acylglycerol + an acyl-CoA = a 1,2-diacylglycerol + CoA. The catalysed reaction is 1-dodecanoylglycerol + (9Z)-octadecenoyl-CoA = 1-dodecanoyl-2-(9Z-octadecenoyl)-glycerol + CoA. It catalyses the reaction 1-tetradecanoylglycerol + (9Z)-octadecenoyl-CoA = 1-tetradecanoyl-2-(9Z-octadecenoyl)-glycerol + CoA. The enzyme catalyses 1-hexadecanoylglycerol + (9Z)-octadecenoyl-CoA = 1-hexadecanoyl-2-(9Z-octadecenoyl)-glycerol + CoA. It carries out the reaction 1-(9Z-octadecenoyl)-glycerol + (9Z)-octadecenoyl-CoA = 1,2-di-(9Z-octadecenoyl)-glycerol + CoA. The catalysed reaction is 1-(9Z,12Z-octadecadienoyl)-glycerol + (9Z)-octadecenoyl-CoA = 1-(9Z,12Z-octadecadienoyl)-2-(9Z-octadecenoyl)-glycerol + CoA. It catalyses the reaction 1-(9Z,12Z,15Z-octadecatrienoyl)-glycerol + (9Z)-octadecenoyl-CoA = 1-(9Z,12Z,15Z-octadecatrienoyl)-2-(9Z-octadecenoyl)-glycerol + CoA. The enzyme catalyses 1-(5Z,8Z,11Z,14Z-eicosatetraenoyl)-glycerol + (9Z)-octadecenoyl-CoA = 1-(5Z,8Z,11Z,14Z-eicosatetraenoyl)-2-(9Z-octadecenoyl)-glycerol + CoA. It carries out the reaction a 1-acylglycerol + an acyl-CoA = a 1,3-diacylglycerol + CoA. The catalysed reaction is 1-dodecanoylglycerol + (9Z)-octadecenoyl-CoA = 1-dodecanoyl-3-(9Z-octadecenoyl)-glycerol + CoA. It catalyses the reaction 1-hexadecanoylglycerol + (9Z)-octadecenoyl-CoA = 1-(9Z-octadecenoyl)-3-hexadecanoylglycerol + CoA. The enzyme catalyses 1-octadecanoylglycerol + (9Z)-octadecenoyl-CoA = 1-octadecanoyl-3-(9Z-octadecenoyl)-glycerol + CoA. It carries out the reaction 1-(9Z-octadecenoyl)-sn-glycerol + (9Z)-octadecenoyl-CoA = 1,3-di-(9Z-octadecenoyl)-glycerol + CoA. The catalysed reaction is 1-(9Z,12Z-octadecadienoyl)-glycerol + (9Z)-octadecenoyl-CoA = 1-(9Z-octadecenoyl)-3-(9Z,12Z-octadecadienoyl)-glycerol + CoA. It catalyses the reaction 1-(9Z,12Z,15Z-octadecatrienoyl)-glycerol + (9Z)-octadecenoyl-CoA = 1-(9Z,12Z,15Z-octadecatrienoyl)-3-(9Z-octadecenoyl)-glycerol + CoA. The enzyme catalyses a 1-acyl-sn-glycerol + an acyl-CoA = a 1,3-diacyl-sn-glycerol + CoA. It carries out the reaction a 3-acyl-sn-glycerol + an acyl-CoA = a 1,3-diacyl-sn-glycerol + CoA. The catalysed reaction is 3-octadecanoyl-sn-glycerol + (9Z)-octadecenoyl-CoA = 1-(9Z-octadecenoyl)-3-octadecanoyl-sn-glycerol + CoA. It functions in the pathway glycerolipid metabolism; triacylglycerol biosynthesis. In terms of biological role, involved in glycerolipid synthesis and lipid metabolism. Catalyzes the formation of diacylglycerol, the precursor of triacylglycerol, by transferring the acyl chain of a fatty acyl-CoA to a monoacylglycerol, mainly at the sn-1 or sn-3 positions. It uses both sn-2-monoacylglycerol (2-acylglycerol) and sn-1-monoacylglycerol (1-acyl-sn-glycerol) equally well as substrates, and uses sn-3-monoacylglycerol (3-acyl-sn-glycerol) with lower efficiency. Probably not involved in absorption of dietary fat in the small intestine. The protein is 2-acylglycerol O-acyltransferase 1 (MOGAT1) of Bos taurus (Bovine).